The following is a 207-amino-acid chain: Holliday junction branch migration complex subunit RuvA (207 aa).

Positions 1–71 are domain I; it reads MIVSIAGKLV…RLTPRLIGFS (71 aa). A domain II region spans residues 72 to 149; that stretch reads TLPERQFFDL…RFALMVAGGE (78 aa). Residues 150-155 form a flexible linker region; that stretch reads VADAME. Residues 156–207 are domain III; the sequence is VESPIVSDTYDALVTLGHSESDARKLIDETLATGKKFKDTESLLTAIYQRSK.

This sequence belongs to the RuvA family. Homotetramer. Forms an RuvA(8)-RuvB(12)-Holliday junction (HJ) complex. HJ DNA is sandwiched between 2 RuvA tetramers; dsDNA enters through RuvA and exits via RuvB. An RuvB hexamer assembles on each DNA strand where it exits the tetramer. Each RuvB hexamer is contacted by two RuvA subunits (via domain III) on 2 adjacent RuvB subunits; this complex drives branch migration. In the full resolvosome a probable DNA-RuvA(4)-RuvB(12)-RuvC(2) complex forms which resolves the HJ.

The protein resides in the cytoplasm. In terms of biological role, the RuvA-RuvB-RuvC complex processes Holliday junction (HJ) DNA during genetic recombination and DNA repair, while the RuvA-RuvB complex plays an important role in the rescue of blocked DNA replication forks via replication fork reversal (RFR). RuvA specifically binds to HJ cruciform DNA, conferring on it an open structure. The RuvB hexamer acts as an ATP-dependent pump, pulling dsDNA into and through the RuvAB complex. HJ branch migration allows RuvC to scan DNA until it finds its consensus sequence, where it cleaves and resolves the cruciform DNA. The sequence is that of Holliday junction branch migration complex subunit RuvA from Rhodopirellula baltica (strain DSM 10527 / NCIMB 13988 / SH1).